A 487-amino-acid polypeptide reads, in one-letter code: Chromosomal replication initiator protein DnaA (487 aa).

The tract at residues 1–79 (MPNSMWHQCL…QAPRVMMKVG (79 aa)) is domain I, interacts with DnaA modulators. The disordered stretch occupies residues 78-138 (VGSAPKPTDP…PAPKAQAERR (61 aa)). The segment at 79 to 150 (GSAPKPTDPV…QVEGDIKHQS (72 aa)) is domain II. The tract at residues 151 to 367 (FLNETFTFDT…GALRLVIANA (217 aa)) is domain III, AAA+ region. Positions 195, 197, 198, and 199 each coordinate ATP. Residues 368 to 487 (HFTGSEITPP…YQNFMRLLTT (120 aa)) form a domain IV, binds dsDNA region.

The protein belongs to the DnaA family. Oligomerizes as a right-handed, spiral filament on DNA at oriC.

The protein localises to the cytoplasm. Functionally, plays an essential role in the initiation and regulation of chromosomal replication. ATP-DnaA binds to the origin of replication (oriC) to initiate formation of the DNA replication initiation complex once per cell cycle. Binds the DnaA box (a 9 base pair repeat at the origin) and separates the double-stranded (ds)DNA. Forms a right-handed helical filament on oriC DNA; dsDNA binds to the exterior of the filament while single-stranded (ss)DNA is stabiized in the filament's interior. The ATP-DnaA-oriC complex binds and stabilizes one strand of the AT-rich DNA unwinding element (DUE), permitting loading of DNA polymerase. After initiation quickly degrades to an ADP-DnaA complex that is not apt for DNA replication. Binds acidic phospholipids. The polypeptide is Chromosomal replication initiator protein DnaA (Marinobacter nauticus (strain ATCC 700491 / DSM 11845 / VT8) (Marinobacter aquaeolei)).